A 142-amino-acid polypeptide reads, in one-letter code: Large ribosomal subunit protein uL11 (142 aa).

It belongs to the universal ribosomal protein uL11 family. Part of the ribosomal stalk of the 50S ribosomal subunit. Interacts with L10 and the large rRNA to form the base of the stalk. L10 forms an elongated spine to which L12 dimers bind in a sequential fashion forming a multimeric L10(L12)X complex. In terms of processing, one or more lysine residues are methylated.

Its function is as follows. Forms part of the ribosomal stalk which helps the ribosome interact with GTP-bound translation factors. The sequence is that of Large ribosomal subunit protein uL11 from Stenotrophomonas maltophilia (strain R551-3).